The sequence spans 220 residues: Nitrile hydratase subunit beta (220 aa).

It belongs to the nitrile hydratase subunit beta family. Heterodimer of an alpha and a beta chain.

The enzyme catalyses an aliphatic primary amide = an aliphatic nitrile + H2O. Functionally, NHase catalyzes the hydration of various nitrile compounds to the corresponding amides. In Pseudomonas chlororaphis (Pseudomonas aureofaciens), this protein is Nitrile hydratase subunit beta (nthB).